The sequence spans 41 residues: Photosystem I reaction center subunit IX (41 aa).

A helical membrane pass occupies residues 7–27; the sequence is YLSTAPVLATLWFGFLAGLLI.

Belongs to the PsaJ family.

The protein localises to the plastid. It is found in the chloroplast thylakoid membrane. In terms of biological role, may help in the organization of the PsaE and PsaF subunits. This Physcomitrium patens (Spreading-leaved earth moss) protein is Photosystem I reaction center subunit IX.